The following is a 987-amino-acid chain: Leucine--tRNA ligase (987 aa).

Residues 69 to 80 (PYPSGKGLHVGH) carry the 'HIGH' region motif. A 'KMSKS' region motif is present at residues 760 to 764 (KMGKS). Lys-763 contacts ATP.

The protein belongs to the class-I aminoacyl-tRNA synthetase family.

It is found in the cytoplasm. The enzyme catalyses tRNA(Leu) + L-leucine + ATP = L-leucyl-tRNA(Leu) + AMP + diphosphate. The polypeptide is Leucine--tRNA ligase (Bifidobacterium longum (strain DJO10A)).